The primary structure comprises 337 residues: Ketol-acid reductoisomerase (NADP(+)) (337 aa).

The KARI N-terminal Rossmann domain occupies 3-183; the sequence is VEMFYDDDAD…GGTRAGVIKT (181 aa). Residues 26-29, K49, S52, S54, and 84-87 contribute to the NADP(+) site; these read YGSQ and DTAQ. The active site involves H109. G135 provides a ligand contact to NADP(+). A KARI C-terminal knotted domain is found at 184–329; the sequence is TFKEETETDL…KKLRDLMSWV (146 aa). Positions 192, 196, 228, and 232 each coordinate Mg(2+). S253 is a binding site for substrate.

Belongs to the ketol-acid reductoisomerase family. Mg(2+) serves as cofactor.

The enzyme catalyses (2R)-2,3-dihydroxy-3-methylbutanoate + NADP(+) = (2S)-2-acetolactate + NADPH + H(+). The catalysed reaction is (2R,3R)-2,3-dihydroxy-3-methylpentanoate + NADP(+) = (S)-2-ethyl-2-hydroxy-3-oxobutanoate + NADPH + H(+). Its pathway is amino-acid biosynthesis; L-isoleucine biosynthesis; L-isoleucine from 2-oxobutanoate: step 2/4. It functions in the pathway amino-acid biosynthesis; L-valine biosynthesis; L-valine from pyruvate: step 2/4. Its function is as follows. Involved in the biosynthesis of branched-chain amino acids (BCAA). Catalyzes an alkyl-migration followed by a ketol-acid reduction of (S)-2-acetolactate (S2AL) to yield (R)-2,3-dihydroxy-isovalerate. In the isomerase reaction, S2AL is rearranged via a Mg-dependent methyl migration to produce 3-hydroxy-3-methyl-2-ketobutyrate (HMKB). In the reductase reaction, this 2-ketoacid undergoes a metal-dependent reduction by NADPH to yield (R)-2,3-dihydroxy-isovalerate. The protein is Ketol-acid reductoisomerase (NADP(+)) of Rhodococcus jostii (strain RHA1).